Reading from the N-terminus, the 222-residue chain is Glutathione-specific gamma-glutamylcyclotransferase 1 (222 aa).

The segment at 1–25 (MKQESAAQSTPPPSLSPAPSAQPSW) is disordered. Residue 35–40 (IFGYGS) coordinates substrate. Glutamate 115 functions as the Proton acceptor in the catalytic mechanism.

The protein belongs to the gamma-glutamylcyclotransferase family. ChaC subfamily. Interacts with NOTCH1 (via extracellular region).

It localises to the cytoplasm. The protein localises to the cytosol. Its subcellular location is the golgi apparatus. It is found in the trans-Golgi network. The enzyme catalyses glutathione = L-cysteinylglycine + 5-oxo-L-proline. Its function is as follows. Catalyzes the cleavage of glutathione into 5-oxo-L-proline and a Cys-Gly dipeptide. Acts specifically on glutathione, but not on other gamma-glutamyl peptides. Glutathione depletion is an important factor for apoptosis initiation and execution. Acts as a pro-apoptotic component of the unfolded protein response pathway by mediating the pro-apoptotic effects of the ATF4-ATF3-DDIT3/CHOP cascade. Negative regulator of Notch signaling pathway involved in embryonic neurogenesis: acts by inhibiting Notch cleavage by furin, maintaining Notch in an immature inactive form, thereby promoting neurogenesis in embryos. In Rattus norvegicus (Rat), this protein is Glutathione-specific gamma-glutamylcyclotransferase 1.